The sequence spans 630 residues: Mannosyl-oligosaccharide 1,2-alpha-mannosidase IC (630 aa).

Residues 1 to 22 are Cytoplasmic-facing; the sequence is MLMRKVPGFVPASPWGLRLPQK. The helical; Signal-anchor for type II membrane protein transmembrane segment at 23-43 threads the bilayer; that stretch reads FLFLLFLSGLVTLCFGALFLL. Residues 44 to 630 are Lumenal-facing; sequence PHSSRLKRLF…DSSGRAWGRH (587 aa). The interval 74–140 is disordered; the sequence is PAREQEPPPN…ASRPGDEGVP (67 aa). The span at 80-89 shows a compositional bias: pro residues; that stretch reads PPPNPAPAAP. The span at 102–113 shows a compositional bias: basic residues; it reads PRRRKGGLRRTR. At S164 the chain carries Phosphoserine. The N-linked (GlcNAc...) asparagine glycan is linked to N250. The cysteines at positions 453 and 485 are disulfide-linked. The active-site Proton donor is the E499. T610 provides a ligand contact to Ca(2+). N618 is a glycosylation site (N-linked (GlcNAc...) asparagine).

It belongs to the glycosyl hydrolase 47 family. The cofactor is Ca(2+). In terms of tissue distribution, expressed in most tissues with the exception of lung, muscle and pancreas. Highly expressed in placenta.

Its subcellular location is the golgi apparatus membrane. It carries out the reaction N(4)-(alpha-D-Man-(1-&gt;2)-alpha-D-Man-(1-&gt;2)-alpha-D-Man-(1-&gt;3)-[alpha-D-Man-(1-&gt;2)-alpha-D-Man-(1-&gt;3)-[alpha-D-Man-(1-&gt;2)-alpha-D-Man-(1-&gt;6)]-alpha-D-Man-(1-&gt;6)]-beta-D-Man-(1-&gt;4)-beta-D-GlcNAc-(1-&gt;4)-beta-D-GlcNAc)-L-asparaginyl-[protein] (N-glucan mannose isomer 9A1,2,3B1,2,3) + 4 H2O = N(4)-(alpha-D-Man-(1-&gt;3)-[alpha-D-Man-(1-&gt;3)-[alpha-D-Man-(1-&gt;6)]-alpha-D-Man-(1-&gt;6)]-beta-D-Man-(1-&gt;4)-beta-D-GlcNAc-(1-&gt;4)-beta-D-GlcNAc)-L-asparaginyl-[protein] (N-glucan mannose isomer 5A1,2) + 4 beta-D-mannose. The enzyme catalyses N(4)-(alpha-D-Man-(1-&gt;2)-alpha-D-Man-(1-&gt;2)-alpha-D-Man-(1-&gt;3)-[alpha-D-Man-(1-&gt;3)-[alpha-D-Man-(1-&gt;2)-alpha-D-Man-(1-&gt;6)]-alpha-D-Man-(1-&gt;6)]-beta-D-Man-(1-&gt;4)-beta-D-GlcNAc-(1-&gt;4)-beta-D-GlcNAc)-L-asparaginyl-[protein] (N-glucan mannose isomer 8A1,2,3B1,3) + 3 H2O = N(4)-(alpha-D-Man-(1-&gt;3)-[alpha-D-Man-(1-&gt;3)-[alpha-D-Man-(1-&gt;6)]-alpha-D-Man-(1-&gt;6)]-beta-D-Man-(1-&gt;4)-beta-D-GlcNAc-(1-&gt;4)-beta-D-GlcNAc)-L-asparaginyl-[protein] (N-glucan mannose isomer 5A1,2) + 3 beta-D-mannose. It participates in protein modification; protein glycosylation. Its activity is regulated as follows. Inhibited by both 1-deoxymannojirimycin and kifunensine. In terms of biological role, involved in the maturation of Asn-linked oligosaccharides. Trim alpha-1,2-linked mannose residues from Man(9)GlcNAc(2) to produce first Man(8)GlcNAc(2) then Man(6)GlcNAc and a small amount of Man(5)GlcNAc. The sequence is that of Mannosyl-oligosaccharide 1,2-alpha-mannosidase IC (MAN1C1) from Homo sapiens (Human).